We begin with the raw amino-acid sequence, 88 residues long: MQKTRFDELVDFPCHFTFKVMGVASDSLPDQVVEVLQEHAPGDYSPSVKPSSKGNYHSISVAVRVESQQHIEILYRSLSDIEDVRYVL.

It belongs to the UPF0250 family.

This is UPF0250 protein IL0958 from Idiomarina loihiensis (strain ATCC BAA-735 / DSM 15497 / L2-TR).